Here is a 291-residue protein sequence, read N- to C-terminus: Elongation factor Ts (291 aa).

Residues 79-82 are involved in Mg(2+) ion dislocation from EF-Tu; sequence TDFV.

This sequence belongs to the EF-Ts family.

Its subcellular location is the cytoplasm. Functionally, associates with the EF-Tu.GDP complex and induces the exchange of GDP to GTP. It remains bound to the aminoacyl-tRNA.EF-Tu.GTP complex up to the GTP hydrolysis stage on the ribosome. In Stenotrophomonas maltophilia (strain K279a), this protein is Elongation factor Ts.